The sequence spans 130 residues: C-X-C motif chemokine 5 (130 aa).

Positions 1–37 are cleaved as a signal peptide; the sequence is MSFQLRSSARIPSRSCSSFTLLAFLLLFTLPQHRAQA. Disulfide bonds link C50–C76 and C52–C93.

It belongs to the intercrine alpha (chemokine CxC) family. In terms of assembly, monomer. Homodimer.

The protein resides in the secreted. May participate in the recruitment of inflammatory cells by injured or infected tissue. This Rattus norvegicus (Rat) protein is C-X-C motif chemokine 5 (Cxcl5).